Here is a 338-residue protein sequence, read N- to C-terminus: Nicotinate-nucleotide--dimethylbenzimidazole phosphoribosyltransferase (338 aa).

Glu-305 functions as the Proton acceptor in the catalytic mechanism.

The protein belongs to the CobT family.

It catalyses the reaction 5,6-dimethylbenzimidazole + nicotinate beta-D-ribonucleotide = alpha-ribazole 5'-phosphate + nicotinate + H(+). It participates in nucleoside biosynthesis; alpha-ribazole biosynthesis; alpha-ribazole from 5,6-dimethylbenzimidazole: step 1/2. Its function is as follows. Catalyzes the synthesis of alpha-ribazole-5'-phosphate from nicotinate mononucleotide (NAMN) and 5,6-dimethylbenzimidazole (DMB). In Rhizobium etli (strain ATCC 51251 / DSM 11541 / JCM 21823 / NBRC 15573 / CFN 42), this protein is Nicotinate-nucleotide--dimethylbenzimidazole phosphoribosyltransferase.